We begin with the raw amino-acid sequence, 140 residues long: UPF0102 protein Ppro_1186 (140 aa).

The interval 1–27 (MKRPGDGRQESPSSTARPDNRNTGSRG) is disordered. A compositionally biased stretch (polar residues) spans 10-25 (ESPSSTARPDNRNTGS).

The protein belongs to the UPF0102 family.

In Pelobacter propionicus (strain DSM 2379 / NBRC 103807 / OttBd1), this protein is UPF0102 protein Ppro_1186.